Consider the following 88-residue polypeptide: Phosphoribosyl-ATP pyrophosphatase (88 aa).

Belongs to the PRA-PH family.

The protein localises to the cytoplasm. The catalysed reaction is 1-(5-phospho-beta-D-ribosyl)-ATP + H2O = 1-(5-phospho-beta-D-ribosyl)-5'-AMP + diphosphate + H(+). The protein operates within amino-acid biosynthesis; L-histidine biosynthesis; L-histidine from 5-phospho-alpha-D-ribose 1-diphosphate: step 2/9. This is Phosphoribosyl-ATP pyrophosphatase from Cutibacterium acnes (strain DSM 16379 / KPA171202) (Propionibacterium acnes).